The sequence spans 396 residues: MSKEKFERAKPHVNVGTIGHVDHGKTTLTAALTKVSAARFGSAAQDYDQIDGAPEERARGITISTSHVEYESPLRHYAHVDCPGHADYVKNMITGAAQMDGAILVCSAADGPMPQTREHILLSRQVGVPYIIVFLNKADMVDDAELLELVEMEVRELLNEYDFPGDDTPIVVGSALKALEGDTSEIGIPAIEKLVDALDASIPEPKRDIDKPFLMPIEDVFSISGRGTVVTGRVERGVVKVGDELEIVGLRDTAKTTCTGVEMFRKLLDQGQAGDNVGVLLRGTKREEVERGQVLAKPGTITPHTKFESEVYVLSKEEGGRHTPFFKGYRPQFYFRTTDVTGECVLPEGVEMVMPGDNVKMIVQLIHPIAMDEGLRFAIREGGRTVGAGVVAKIIE.

In terms of domain architecture, tr-type G spans 10–206; sequence KPHVNVGTIG…ALDASIPEPK (197 aa). The G1 stretch occupies residues 19 to 26; it reads GHVDHGKT. Residue 19-26 participates in GTP binding; that stretch reads GHVDHGKT. Threonine 26 lines the Mg(2+) pocket. Positions 60-64 are G2; sequence GITIS. Positions 81-84 are G3; sequence DCPG. GTP is bound by residues 81 to 85 and 136 to 139; these read DCPGH and NKAD. Residues 136-139 form a G4 region; sequence NKAD. The G5 stretch occupies residues 174 to 176; the sequence is SAL.

The protein belongs to the TRAFAC class translation factor GTPase superfamily. Classic translation factor GTPase family. EF-Tu/EF-1A subfamily. As to quaternary structure, monomer.

Its subcellular location is the cytoplasm. It carries out the reaction GTP + H2O = GDP + phosphate + H(+). Functionally, GTP hydrolase that promotes the GTP-dependent binding of aminoacyl-tRNA to the A-site of ribosomes during protein biosynthesis. The chain is Elongation factor Tu from Dichelobacter nodosus (strain VCS1703A).